Reading from the N-terminus, the 453-residue chain is Ribulose bisphosphate carboxylase large chain (453 aa).

Residues 1-2 (MS) constitute a propeptide that is removed on maturation. Pro-3 carries the N-acetylproline modification. At Lys-14 the chain carries N6,N6,N6-trimethyllysine. 2 residues coordinate substrate: Asn-123 and Thr-173. The active-site Proton acceptor is Lys-175. Lys-177 is a substrate binding site. 3 residues coordinate Mg(2+): Lys-201, Asp-203, and Glu-204. Position 201 is an N6-carboxylysine (Lys-201). The active-site Proton acceptor is the His-294. The substrate site is built by Arg-295, His-327, and Ser-379.

It belongs to the RuBisCO large chain family. Type I subfamily. Heterohexadecamer of 8 large chains and 8 small chains; disulfide-linked. The disulfide link is formed within the large subunit homodimers. Requires Mg(2+) as cofactor. In terms of processing, the disulfide bond which can form in the large chain dimeric partners within the hexadecamer appears to be associated with oxidative stress and protein turnover.

The protein resides in the plastid. It is found in the chloroplast. The enzyme catalyses 2 (2R)-3-phosphoglycerate + 2 H(+) = D-ribulose 1,5-bisphosphate + CO2 + H2O. The catalysed reaction is D-ribulose 1,5-bisphosphate + O2 = 2-phosphoglycolate + (2R)-3-phosphoglycerate + 2 H(+). Functionally, ruBisCO catalyzes two reactions: the carboxylation of D-ribulose 1,5-bisphosphate, the primary event in carbon dioxide fixation, as well as the oxidative fragmentation of the pentose substrate in the photorespiration process. Both reactions occur simultaneously and in competition at the same active site. This Crucianella angustifolia (Narrow-leaved crosswort) protein is Ribulose bisphosphate carboxylase large chain.